The sequence spans 87 residues: U14-lycotoxin-Ls1a (87 aa).

Positions 1-20 (MNSKVFAALLLLALSTCVLS) are cleaved as a signal peptide. The WAP domain maps to 21 to 66 (EKYCPTPRNTSCKKMNIRNNCCRDSDCTSNAFCCAEPCGNFCHKAS). Disulfide bonds link Cys-24-Cys-54, Cys-32-Cys-58, Cys-41-Cys-53, Cys-42-Cys-80, and Cys-47-Cys-62.

The protein belongs to the venom protein 11 family. 01 (wap-1) subfamily. In terms of processing, contains 5 disulfide bonds. Expressed by the venom gland.

The protein resides in the secreted. Functionally, has antibacterial activity. The sequence is that of U14-lycotoxin-Ls1a from Lycosa singoriensis (Wolf spider).